A 264-amino-acid polypeptide reads, in one-letter code: Putative hydro-lyase RBAM_004300 (264 aa).

Belongs to the D-glutamate cyclase family.

The protein is Putative hydro-lyase RBAM_004300 of Bacillus velezensis (strain DSM 23117 / BGSC 10A6 / LMG 26770 / FZB42) (Bacillus amyloliquefaciens subsp. plantarum).